Consider the following 617-residue polypeptide: RNA polymerase sigma factor RpoD (617 aa).

A disordered region spans residues Asn192–Asn222. Acidic residues predominate over residues Asn198–Ile216. The interval Met383–Thr453 is sigma-70 factor domain-2. The Interaction with polymerase core subunit RpoC motif lies at Asp407–Gln410. The tract at residues Glu462–Ser538 is sigma-70 factor domain-3. The sigma-70 factor domain-4 stretch occupies residues Val551–His604. The segment at residues Leu577 to Ala596 is a DNA-binding region (H-T-H motif).

The protein belongs to the sigma-70 factor family. RpoD/SigA subfamily. In terms of assembly, interacts transiently with the RNA polymerase catalytic core.

The protein localises to the cytoplasm. Its function is as follows. Sigma factors are initiation factors that promote the attachment of RNA polymerase to specific initiation sites and are then released. This sigma factor is the primary sigma factor during exponential growth. The polypeptide is RNA polymerase sigma factor RpoD (Buchnera aphidicola subsp. Schizaphis graminum (strain Sg)).